Consider the following 106-residue polypeptide: Large ribosomal subunit protein bL21 (106 aa).

Belongs to the bacterial ribosomal protein bL21 family. In terms of assembly, part of the 50S ribosomal subunit. Contacts protein L20.

Functionally, this protein binds to 23S rRNA in the presence of protein L20. This Dichelobacter nodosus (strain VCS1703A) protein is Large ribosomal subunit protein bL21.